Here is a 470-residue protein sequence, read N- to C-terminus: Isocitrate dehydrogenase (NAD(+)), mitochondrial (470 aa).

The transit peptide at 1–26 (MTRVERGRVLARAIERAVAHRASARR) directs the protein to the mitochondrion. NAD(+) is bound by residues 138-140 (TVT) and N159. D-threo-isocitrate contacts are provided by residues 157 to 163 (SPNGAMR), R193, Y200, K275, and D319. D319 contributes to the Mg(2+) binding site. Position 324 (K324) interacts with NAD(+). D343 provides a ligand contact to D-threo-isocitrate. D343 and D347 together coordinate Mg(2+). Residues 380–385 (HGTVAD) and N399 contribute to the NAD(+) site.

It belongs to the isocitrate and isopropylmalate dehydrogenases family. Forms homodimers. Mg(2+) serves as cofactor. The cofactor is Mn(2+).

The protein localises to the mitochondrion. It carries out the reaction D-threo-isocitrate + NAD(+) = 2-oxoglutarate + CO2 + NADH. The homodimer exhibits allosteric regulation by isocitrate. Performs an essential role in the oxidative function of the tricarboxylic acid cycle and respiration. Catalyzes the decarboxylation of isocitrate to produce 2-oxoglutarate and generate NADH to provide electrons for energy production. The sequence is that of Isocitrate dehydrogenase (NAD(+)), mitochondrial from Ostreococcus tauri.